We begin with the raw amino-acid sequence, 254 residues long: Adenosine 5'-phosphosulfate reductase (254 aa).

Residues C140, C141, C223, and C226 each coordinate [4Fe-4S] cluster. Catalysis depends on C249, which acts as the Nucleophile; cysteine thiosulfonate intermediate.

It belongs to the PAPS reductase family. CysH subfamily. Requires [4Fe-4S] cluster as cofactor.

Its subcellular location is the cytoplasm. It carries out the reaction [thioredoxin]-disulfide + sulfite + AMP + 2 H(+) = adenosine 5'-phosphosulfate + [thioredoxin]-dithiol. It participates in sulfur metabolism; hydrogen sulfide biosynthesis; sulfite from sulfate. In terms of biological role, catalyzes the formation of sulfite from adenosine 5'-phosphosulfate (APS) using thioredoxin as an electron donor. This is Adenosine 5'-phosphosulfate reductase from Mycobacterium bovis (strain ATCC BAA-935 / AF2122/97).